A 949-amino-acid polypeptide reads, in one-letter code: Thrombospondin-4-B (949 aa).

The first 22 residues, 1–22 (MAGTMHLLTAVSLILMLSSANA), serve as a signal peptide directing secretion. In terms of domain architecture, Laminin G-like spans 23–198 (ESTVYNLLTS…LEELKLAYGD (176 aa)). Disulfide bonds link Cys276–Cys287, Cys281–Cys296, Cys299–Cys310, Cys316–Cys327, Cys321–Cys336, Cys339–Cys363, Cys369–Cys383, Cys377–Cys392, Cys395–Cys407, Cys413–Cys427, Cys421–Cys437, Cys439–Cys450, Cys466–Cys471, Cys476–Cys496, Cys512–Cys532, Cys535–Cys555, Cys571–Cys591, Cys594–Cys614, Cys632–Cys652, Cys672–Cys692, and Cys708–Cys929. The 38-residue stretch at 312 to 349 (DVDECQFNPCFPGVRCVNMAPGFRCEACPLGFTGKPLE) folds into the EGF-like 1; calcium-binding domain. An EGF-like 2; calcium-binding domain is found at 365 to 408 (DIDECKGPDNGGCTANSICVNSVGSYQCGRCKTGFTGDQIRGCK). Positions 409–451 (PEKSCGNRLQNPCDPNAQCTEERDGTITCQCGIGWAGNGYLCG) constitute an EGF-like 3 domain. 8 TSP type-3 repeats span residues 452 to 484 (KDTDIDGYPDERLRCRDPTCRKDNCVTVPNSGQ), 485 to 520 (EDADGDGKGDACDPDADGDGILNEQDNCWLTPNINQ), 521 to 543 (QNSDKDSHGDACDNCVRVDNPDQ), 544 to 579 (RDTDSDGLGDACDDDMDGDGLKNFLDNCQRVKNRDQ), 580 to 602 (LDRDGDGVGDACDSCPDIPNPNQ), 603 to 640 (SDIDNDLVGDSCDTNQDSDGDGHQDSKDNCPMVINSSQ), 641 to 680 (LDTDKDGIGDECDDDDDNDGIPDSLPPGPDNCRLVPNPEQ), and 681 to 716 (IDDNNDGVGDICESDFDQDKVIDRIDNCPENAEITL). The interval 578 to 671 (DQLDRDGDGV…PDSLPPGPDN (94 aa)) is disordered. N-linked (GlcNAc...) asparagine glycosylation is found at Asn601 and Asn637. A compositionally biased stretch (acidic residues) spans 649–660 (GDECDDDDDNDG). Residues 720-934 (RAYQTVVLDP…LKYRCNDTIP (215 aa)) form the TSP C-terminal domain. Asn930 carries N-linked (GlcNAc...) asparagine glycosylation.

Belongs to the thrombospondin family. As to quaternary structure, homotrimer; disulfide-linked.

The protein localises to the endoplasmic reticulum. The protein resides in the sarcoplasmic reticulum. It is found in the secreted. It localises to the extracellular space. Its subcellular location is the extracellular matrix. Functionally, adhesive glycoprotein that mediates cell-to-cell and cell-to-matrix interactions and may be involved in various processes including cellular proliferation, migration, adhesion and attachment. May play a role in ER stress response. In Danio rerio (Zebrafish), this protein is Thrombospondin-4-B (thbs4b).